The chain runs to 96 residues: MSKSAVSPSEARRWYVRGRVQGVGYRDFAQRAAVQLGLTGYARNLDDGRVEVYAVGPPSKLSELAGMLYRGPRWSDVRGIEEQEAAITSYDSFRIR.

Residues 11–96 (ARRWYVRGRV…ITSYDSFRIR (86 aa)) enclose the Acylphosphatase-like domain. Catalysis depends on residues Arg-26 and Asn-44.

This sequence belongs to the acylphosphatase family.

It carries out the reaction an acyl phosphate + H2O = a carboxylate + phosphate + H(+). The polypeptide is Acylphosphatase (acyP) (Solibacter usitatus (strain Ellin6076)).